We begin with the raw amino-acid sequence, 239 residues long: Peptidyl-tRNA hydrolase (239 aa).

TRNA is bound at residue tyrosine 14. The active-site Proton acceptor is histidine 19. 3 residues coordinate tRNA: phenylalanine 64, asparagine 66, and asparagine 112. The tract at residues 186–239 (RTAPPRPSTGTGRPPAKTPARAEEPPAPAASPAPATAPLPDARSPLQKLVDRFK) is disordered. Positions 193–204 (STGTGRPPAKTP) are enriched in low complexity. The span at 210 to 222 (PPAPAASPAPATA) shows a compositional bias: pro residues.

It belongs to the PTH family. In terms of assembly, monomer.

Its subcellular location is the cytoplasm. The catalysed reaction is an N-acyl-L-alpha-aminoacyl-tRNA + H2O = an N-acyl-L-amino acid + a tRNA + H(+). In terms of biological role, hydrolyzes ribosome-free peptidyl-tRNAs (with 1 or more amino acids incorporated), which drop off the ribosome during protein synthesis, or as a result of ribosome stalling. Catalyzes the release of premature peptidyl moieties from peptidyl-tRNA molecules trapped in stalled 50S ribosomal subunits, and thus maintains levels of free tRNAs and 50S ribosomes. The sequence is that of Peptidyl-tRNA hydrolase from Ruegeria pomeroyi (strain ATCC 700808 / DSM 15171 / DSS-3) (Silicibacter pomeroyi).